The chain runs to 390 residues: MQMMQRNVVGQRPVAGSRRSLVVANVAEVTRPAVSTNGKHRTGVPEGTPIVTPQDLPSRPRRNRRSESFRASVREVNVSPANFILPIFIHEESNQNVPIASMPGINRLAYGKNVIDYVAEPRSYGVNQVVVFPKTPDHLKTQTAEEAFNKNGLSQRTIRLLKDSFPDLEVYTDVALDPYNSDGHDGIVSDAGVILNDETIEYLCRQAVSQAEAGADVVSPSDMMDGRVGAIRRALDREGFTNVSIMSYTAKYASAYYGPFRDALASAPKPGQAHRRIPPNKKTYQMDPANYREAIREAKADEAEGADIMMVKPGMPYLDVVRLLRETSPLPVAVYHVSGEYAMLKAAAERGWLNEKDAVLEAMTCFRRAGGDLILTYYGIEASKWLAGEK.

The N-terminal 24 residues, 1–24 (MQMMQRNVVGQRPVAGSRRSLVVA), are a transit peptide targeting the chloroplast. A disordered region spans residues 34-69 (VSTNGKHRTGVPEGTPIVTPQDLPSRPRRNRRSESF). K251 serves as the catalytic Schiff-base intermediate with substrate. Residues R261 and K281 each contribute to the 5-aminolevulinate site. E297 is a Mg(2+) binding site. K312 serves as the catalytic Schiff-base intermediate with substrate. Residues S338 and Y377 each contribute to the 5-aminolevulinate site.

The protein belongs to the ALAD family. As to quaternary structure, homooctamer. Requires Mg(2+) as cofactor.

The protein resides in the plastid. The protein localises to the chloroplast. The catalysed reaction is 2 5-aminolevulinate = porphobilinogen + 2 H2O + H(+). It functions in the pathway porphyrin-containing compound metabolism; protoporphyrin-IX biosynthesis; coproporphyrinogen-III from 5-aminolevulinate: step 1/4. Its function is as follows. Catalyzes an early step in the biosynthesis of tetrapyrroles. Binds two molecules of 5-aminolevulinate per subunit, each at a distinct site, and catalyzes their condensation to form porphobilinogen. This is Delta-aminolevulinic acid dehydratase, chloroplastic (HEMB) from Chlamydomonas reinhardtii (Chlamydomonas smithii).